The primary structure comprises 103 residues: MSLLEQVSVSKKANIYFDGKVASRSVFFADGSKQTLGVVQPGEYEFSTSQGEIMEVISGRFEVLLPETTTWQEFNEGTQFELAANVSFKIRNTAIAEYCCSYL.

It belongs to the nucleoside phosphorylase PpnP family.

It catalyses the reaction a purine D-ribonucleoside + phosphate = a purine nucleobase + alpha-D-ribose 1-phosphate. It carries out the reaction adenosine + phosphate = alpha-D-ribose 1-phosphate + adenine. The enzyme catalyses cytidine + phosphate = cytosine + alpha-D-ribose 1-phosphate. The catalysed reaction is guanosine + phosphate = alpha-D-ribose 1-phosphate + guanine. It catalyses the reaction inosine + phosphate = alpha-D-ribose 1-phosphate + hypoxanthine. It carries out the reaction thymidine + phosphate = 2-deoxy-alpha-D-ribose 1-phosphate + thymine. The enzyme catalyses uridine + phosphate = alpha-D-ribose 1-phosphate + uracil. The catalysed reaction is xanthosine + phosphate = alpha-D-ribose 1-phosphate + xanthine. Its function is as follows. Catalyzes the phosphorolysis of diverse nucleosides, yielding D-ribose 1-phosphate and the respective free bases. Can use uridine, adenosine, guanosine, cytidine, thymidine, inosine and xanthosine as substrates. Also catalyzes the reverse reactions. This chain is Pyrimidine/purine nucleoside phosphorylase, found in Shewanella baltica (strain OS223).